We begin with the raw amino-acid sequence, 102 residues long: NADH-quinone oxidoreductase subunit K (102 aa).

3 helical membrane passes run Ile4–Val24, Leu31–Ile51, and Phe65–Trp85.

It belongs to the complex I subunit 4L family. NDH-1 is composed of 14 different subunits. Subunits NuoA, H, J, K, L, M, N constitute the membrane sector of the complex.

The protein localises to the cell inner membrane. It catalyses the reaction a quinone + NADH + 5 H(+)(in) = a quinol + NAD(+) + 4 H(+)(out). In terms of biological role, NDH-1 shuttles electrons from NADH, via FMN and iron-sulfur (Fe-S) centers, to quinones in the respiratory chain. The immediate electron acceptor for the enzyme in this species is believed to be ubiquinone. Couples the redox reaction to proton translocation (for every two electrons transferred, four hydrogen ions are translocated across the cytoplasmic membrane), and thus conserves the redox energy in a proton gradient. This Sulfurimonas denitrificans (strain ATCC 33889 / DSM 1251) (Thiomicrospira denitrificans (strain ATCC 33889 / DSM 1251)) protein is NADH-quinone oxidoreductase subunit K.